The chain runs to 134 residues: Loki profilin-1 (134 aa).

The loki loop stretch occupies residues L55–I62.

It belongs to the Asgard profilin family.

Its subcellular location is the cytoplasm. It is found in the cytoskeleton. Inhibition of rabbit actin polymerization is reduced by phosphatidylinositol-(4,5)-P2(1,2-dipalmitoyl), a soluble form of the phospholipid phosphatidylinositol, suggesting an unknown lipid might regulate actin-profilin interaction in vivo. Functionally, binds to actin and affects the structure of the cytoskeleton. At high concentrations inhibits spontaneous rabbit actin nucleation. This strongly suggests this archaea has a profilin-regulated actin system, and actin-type genes can be identified in this organism. This chain is Loki profilin-1, found in Lokiarchaeum sp. (strain GC14_75).